The following is a 535-amino-acid chain: Dimethylaniline monooxygenase [N-oxide-forming] 2 (535 aa).

A2 is modified (N-acetylalanine). FAD-binding positions include 9–13, E32, 40–41, and 61–62; these read GAGVS, VW, and NT. NADP(+)-binding positions include 60-61 and 195-198; these read TN and SGSD. K492 is covalently cross-linked (Glycyl lysine isopeptide (Lys-Gly) (interchain with G-Cter in SUMO)). A helical transmembrane segment spans residues 510 to 530; sequence FPVSFLLKILGLVAVVVAFFC.

Belongs to the FMO family. FAD is required as a cofactor. It depends on Mg(2+) as a cofactor.

The protein resides in the microsome membrane. The protein localises to the endoplasmic reticulum membrane. It carries out the reaction N,N-dimethylaniline + NADPH + O2 + H(+) = N,N-dimethylaniline N-oxide + NADP(+) + H2O. In terms of biological role, catalyzes the oxidative metabolism of numerous xenobiotics, including mainly therapeutic drugs and insecticides that contain a soft nucleophile, most commonly nitrogen and sulfur and participates to their bioactivation. The polypeptide is Dimethylaniline monooxygenase [N-oxide-forming] 2 (Macaca mulatta (Rhesus macaque)).